Reading from the N-terminus, the 112-residue chain is Small ribosomal subunit protein bS6 (112 aa).

Belongs to the bacterial ribosomal protein bS6 family.

Functionally, binds together with bS18 to 16S ribosomal RNA. This chain is Small ribosomal subunit protein bS6 (rpsF), found in Chlamydia muridarum (strain MoPn / Nigg).